Here is a 225-residue protein sequence, read N- to C-terminus: Protein-L-isoaspartate O-methyltransferase (225 aa).

Ser75 is a catalytic residue.

Belongs to the methyltransferase superfamily. L-isoaspartyl/D-aspartyl protein methyltransferase family.

Its subcellular location is the cytoplasm. The enzyme catalyses [protein]-L-isoaspartate + S-adenosyl-L-methionine = [protein]-L-isoaspartate alpha-methyl ester + S-adenosyl-L-homocysteine. Catalyzes the methyl esterification of L-isoaspartyl residues in peptides and proteins that result from spontaneous decomposition of normal L-aspartyl and L-asparaginyl residues. It plays a role in the repair and/or degradation of damaged proteins. This is Protein-L-isoaspartate O-methyltransferase from Xanthomonas campestris pv. campestris (strain 8004).